The sequence spans 813 residues: Cadherin-22 (813 aa).

An N-terminal signal peptide occupies residues 1 to 33; it reads MRPRPEGALRAGAALSPVLLFLLLLPLLGHLWA. Residues 34–621 are Extracellular-facing; the sequence is ASTPAPSSLS…AFVMAASLSP (588 aa). Cadherin domains follow at residues 61-165, 166-274, 275-391, 392-495, and 496-613; these read WVWN…EPRF, LHGP…PPRF, PQKM…PPEF, RPPS…NPPE, and LATP…TTAF. Residue Asn-159 is glycosylated (N-linked (GlcNAc...) asparagine). 2 N-linked (GlcNAc...) asparagine glycosylation sites follow: Asn-463 and Asn-609. Residues 622–642 form a helical membrane-spanning segment; the sequence is GALIALLVCVLILVVLALLIL. Residues 643-813 are Cytoplasmic-facing; sequence TLRRHHKSHL…HRGDDEAPAS (171 aa). The tract at residues 696–726 is disordered; that stretch reads GGDPGGGAASPPQAASSSERHSLPRGPSSPE.

In terms of tissue distribution, predominantly expressed in brain. Abundant in olfactory bulb, cerebrum, and cerebellum, less in pons, medulla, and spinal cord. Low expression in heart. No expression in lung, liver, spleen, kidney, testis, stomach, intestine, colon, and placenta.

The protein localises to the cell membrane. Cadherins are calcium-dependent cell adhesion proteins. They preferentially interact with themselves in a homophilic manner in connecting cells; cadherins may thus contribute to the sorting of heterogeneous cell types. PB-cadherins may have a role in the morphological organization of pituitary gland and brain tissues. This chain is Cadherin-22 (Cdh22), found in Mus musculus (Mouse).